Consider the following 438-residue polypeptide: UDP-N-acetylmuramate--L-alanine ligase (438 aa).

ATP is bound at residue 108-114 (GAHGKTS).

Belongs to the MurCDEF family.

It localises to the cytoplasm. The catalysed reaction is UDP-N-acetyl-alpha-D-muramate + L-alanine + ATP = UDP-N-acetyl-alpha-D-muramoyl-L-alanine + ADP + phosphate + H(+). It participates in cell wall biogenesis; peptidoglycan biosynthesis. Functionally, cell wall formation. This is UDP-N-acetylmuramate--L-alanine ligase from Oceanobacillus iheyensis (strain DSM 14371 / CIP 107618 / JCM 11309 / KCTC 3954 / HTE831).